The following is a 1217-amino-acid chain: Splicing factor 3B subunit 3 (1217 aa).

2 interaction with PHF5A, SF3B1 and SF3B5 regions span residues 105 to 119 and 145 to 168; these read ETFG…VPGQ and NRDA…TLVY. A Phosphoserine modification is found at Ser156. Interaction with SF3B1 and SF3B5 regions lie at residues 193–231 and 786–804; these read DNDP…LEEH and RKFV…ETDH. The interval 1028 to 1049 is interaction with SF3B1; the sequence is TYPRWVTTASLLDYDTVAGADK. Residues 1100 to 1123 are interaction with SF3B5; sequence TVLSLQKTTLIPGGSESLVYTTLS. The residue at position 1200 (Thr1200) is a Phosphothreonine.

Belongs to the RSE1 family. In terms of assembly, component of the 17S U2 SnRNP complex, a ribonucleoprotein complex that contains small nuclear RNA (snRNA) U2 and a number of specific proteins. Part of the SF3B subcomplex of the 17S U2 SnRNP complex. SF3B associates with the splicing subcomplex SF3A and a 12S RNA unit to form the U2 small nuclear ribonucleoproteins complex (U2 snRNP). Within the SF3B subcomplex, interacts directly with SF3B1 (via HEAT domain), SF3B5 and PHF5A. Identified in the spliceosome A complex; remains associated with the spliceosome throughout the splicing process. Component of the spliceosome B complex. Identified in the spliceosome C complex. Identified in the spliceosome E complex. Component of the minor (U12-type spliceosome) spliceosome. Within this complex, interacts with SCNM1. Associates with the STAGA transcription coactivator-HAT complex. Interacts with SUPT3H. Interacts with TAF3.

It is found in the nucleus. In terms of biological role, component of the 17S U2 SnRNP complex of the spliceosome, a large ribonucleoprotein complex that removes introns from transcribed pre-mRNAs. The 17S U2 SnRNP complex (1) directly participates in early spliceosome assembly and (2) mediates recognition of the intron branch site during pre-mRNA splicing by promoting the selection of the pre-mRNA branch-site adenosine, the nucleophile for the first step of splicing. Within the 17S U2 SnRNP complex, SF3B3 is part of the SF3B subcomplex, which is required for 'A' complex assembly formed by the stable binding of U2 snRNP to the branchpoint sequence in pre-mRNA. Sequence independent binding of SF3A and SF3B subcomplexes upstream of the branch site is essential, it may anchor U2 snRNP to the pre-mRNA. May also be involved in the assembly of the 'E' complex. Also acts as a component of the minor spliceosome, which is involved in the splicing of U12-type introns in pre-mRNAs. This is Splicing factor 3B subunit 3 (SF3B3) from Bos taurus (Bovine).